Consider the following 224-residue polypeptide: Uracil-DNA glycosylase 2 (224 aa).

Asp64 functions as the Proton acceptor in the catalytic mechanism.

It belongs to the uracil-DNA glycosylase (UDG) superfamily. UNG family.

The protein resides in the cytoplasm. The enzyme catalyses Hydrolyzes single-stranded DNA or mismatched double-stranded DNA and polynucleotides, releasing free uracil.. In terms of biological role, excises uracil residues from the DNA which can arise as a result of misincorporation of dUMP residues by DNA polymerase or due to deamination of cytosine. In Listeria monocytogenes serotype 4b (strain F2365), this protein is Uracil-DNA glycosylase 2.